The chain runs to 289 residues: DNA repair protein rad14 (289 aa).

Positions 116, 119, 137, and 140 each coordinate Zn(2+). Residues C116–C140 fold into a zinc finger.

This sequence belongs to the XPA family. As to quaternary structure, interacts with hrq1.

It localises to the nucleus. Functionally, involved in nucleotide excision repair (NER). Functional in repair of ultraviolet radiation induced damages and in mitotic mutation avoidance. Binds damaged DNA. Binds specifically to base-base mismatches or small insertion/deletion loops with unpaired nucleotides. Maintains GT repeat stability. Functions as a part of the short-patch excision repair system. The polypeptide is DNA repair protein rad14 (Schizosaccharomyces pombe (strain 972 / ATCC 24843) (Fission yeast)).